We begin with the raw amino-acid sequence, 123 residues long: Large ribosomal subunit protein uL24 (123 aa).

This sequence belongs to the universal ribosomal protein uL24 family. In terms of assembly, part of the 50S ribosomal subunit.

In terms of biological role, one of two assembly initiator proteins, it binds directly to the 5'-end of the 23S rRNA, where it nucleates assembly of the 50S subunit. One of the proteins that surrounds the polypeptide exit tunnel on the outside of the subunit. The protein is Large ribosomal subunit protein uL24 of Solibacter usitatus (strain Ellin6076).